The following is a 132-amino-acid chain: Small ribosomal subunit protein uS9 (132 aa).

The tract at residues 103 to 132 (NGLLTRDDRTKERKKPGLKRARKAPQYTKR) is disordered. Positions 114–132 (ERKKPGLKRARKAPQYTKR) are enriched in basic residues.

The protein belongs to the universal ribosomal protein uS9 family.

The polypeptide is Small ribosomal subunit protein uS9 (Dehalococcoides mccartyi (strain CBDB1)).